The primary structure comprises 146 residues: Cytochrome c oxidase assembly factor 1 homolog (146 aa).

The Mitochondrial matrix portion of the chain corresponds to methionine 1–proline 14. A helical membrane pass occupies residues leucine 15–isoleucine 37. Residues glutamine 38 to glutamate 146 are Mitochondrial intermembrane-facing.

It belongs to the COA1 family. As to quaternary structure, component of the MITRAC (mitochondrial translation regulation assembly intermediate of cytochrome c oxidase complex) complex, the core components of this complex being COA3/MITRAC12 and COX14. Interacts with COX17 and COA6. Part of the mitochondrial complex I assembly/MCIA complex that comprises at least the core subunits TMEM126B, NDUFAF1, ECSIT and ACAD9 and complement subunits such as COA1 and TMEM186.

The protein localises to the mitochondrion inner membrane. Component of the MITRAC (mitochondrial translation regulation assembly intermediate of cytochrome c oxidase complex) complex, that regulates cytochrome c oxidase assembly. MITRAC complexes regulate both translation of mitochondrial encoded components and assembly of nuclear-encoded components imported in mitochondrion. Required for assembly of mitochondrial respiratory chain complex I and complex IV. As part of the MCIA complex, required for efficient assembly of the mitochondrial complex I. The polypeptide is Cytochrome c oxidase assembly factor 1 homolog (Homo sapiens (Human)).